The primary structure comprises 428 residues: Lysophosphatidic acid phosphatase type 6 (428 aa).

The N-terminal 32 residues, 1-32, are a transit peptide targeting the mitochondrion; the sequence is MITGVFSMRLWTPVGVLTSLAYCLHQRRVALA. A substrate binding region spans residues 58–168; the sequence is RHGARSPLKP…VFIRSTNIFR (111 aa). Catalysis depends on His-59, which acts as the Nucleophile. The active-site Proton donor is Asp-335.

Belongs to the histidine acid phosphatase family. Monomer. Highly expressed in kidney, heart, small intestine, muscle, liver, prostate, testis, ovary and weakly expressed in thymus and colon.

The protein localises to the mitochondrion. It carries out the reaction a phosphate monoester + H2O = an alcohol + phosphate. The enzyme catalyses 1-(9Z-octadecenoyl)-sn-glycero-3-phosphate + H2O = 1-(9Z-octadecenoyl)-sn-glycerol + phosphate. Hydrolyzes lysophosphatidic acid (LPA) containing a medium length fatty acid chain to the corresponding monoacylglycerol. Has highest activity with lysophosphatidic acid containing myristate (C14:0), monounsaturated oleate (C18:1) or palmitate (C16:0), and lower activity with C18:0 and C6:0 lysophosphatidic acid. This Homo sapiens (Human) protein is Lysophosphatidic acid phosphatase type 6 (ACP6).